The sequence spans 98 residues: U11-barytoxin-Tl1b (98 aa).

An N-terminal signal peptide occupies residues 1 to 21 (MKTLVLVAVLGLASLYLLSYA). A propeptide spanning residues 22 to 50 (SEVQQLSRDEEEFRALVASFGGLFDTEER) is cleaved from the precursor. 3 disulfides stabilise this stretch: Cys-57–Cys-71, Cys-64–Cys-76, and Cys-70–Cys-89.

Belongs to the neurotoxin 10 (Hwtx-1) family. 25 (ICK4) subfamily. In terms of tissue distribution, expressed by the venom gland.

It localises to the secreted. Its function is as follows. Ion channel inhibitor. This Trittame loki (Brush-footed trapdoor spider) protein is U11-barytoxin-Tl1b.